A 1248-amino-acid polypeptide reads, in one-letter code: Cullin-associated NEDD8-dissociated protein 1 (1248 aa).

HEAT repeat units follow at residues 44-82 (DESE…KVKE), 127-165 (PNVC…RFGE), 168-206 (VPFH…QANS), 365-403 (EDFY…NTRL), 425-463 (IEQL…SLPG), 510-548 (HPHI…VIRP), 604-642 (QNEL…LRID), 644-682 (TPIL…NYSS), 861-900 (DLSS…GSLQ), 976-1014 (LVNP…DQPQ), and 1054-1093 (PSLV…TVDD).

The protein belongs to the CAND family.

Its function is as follows. Key assembly factor of SCF (SKP1-CUL1-F-box protein) E3 ubiquitin ligase complexes that promotes the exchange of the substrate-recognition F-box subunit in SCF complexes, thereby playing a key role in the cellular repertoire of SCF complexes. Acts as a F-box protein exchange factor. Probably plays a similar role in other cullin-RING E3 ubiquitin ligase complexes. This is Cullin-associated NEDD8-dissociated protein 1 (Cand1) from Drosophila melanogaster (Fruit fly).